A 76-amino-acid chain; its full sequence is DNA-directed RNA polymerase subunit epsilon (76 aa).

It belongs to the RNA polymerase subunit epsilon family. In terms of assembly, RNAP is composed of a core of 2 alpha, a beta and a beta' subunit. The core is associated with a delta subunit, and at least one of epsilon or omega. When a sigma factor is associated with the core the holoenzyme is formed, which can initiate transcription.

The enzyme catalyses RNA(n) + a ribonucleoside 5'-triphosphate = RNA(n+1) + diphosphate. Functionally, a non-essential component of RNA polymerase (RNAP). This chain is DNA-directed RNA polymerase subunit epsilon, found in Streptococcus equi subsp. equi (strain 4047).